A 379-amino-acid polypeptide reads, in one-letter code: Heme A synthase (379 aa).

The tract at residues 1–28 is disordered; sequence MAGSRSIFEEVQDSQKPAAMPGGVSRDR. 8 consecutive transmembrane segments (helical) span residues 35 to 55, 124 to 144, 150 to 170, 183 to 203, 227 to 247, 287 to 307, 318 to 338, and 341 to 361; these read VRVF…IGGL, FLGV…SVPV, LLLL…MVHS, RLAV…WYIL, ATGL…VAGI, FFHR…WIMA, AFDW…MTVM, and SPWY…TLIL. Histidine 289 provides a ligand contact to heme. Histidine 349 is a binding site for heme.

The protein belongs to the COX15/CtaA family. Type 2 subfamily. As to quaternary structure, interacts with CtaB. Requires heme b as cofactor.

The protein resides in the cell membrane. It carries out the reaction Fe(II)-heme o + 2 A + H2O = Fe(II)-heme a + 2 AH2. It participates in porphyrin-containing compound metabolism; heme A biosynthesis; heme A from heme O: step 1/1. Functionally, catalyzes the conversion of heme O to heme A by two successive hydroxylations of the methyl group at C8. The first hydroxylation forms heme I, the second hydroxylation results in an unstable dihydroxymethyl group, which spontaneously dehydrates, resulting in the formyl group of heme A. This Jannaschia sp. (strain CCS1) protein is Heme A synthase.